Reading from the N-terminus, the 290-residue chain is Small ribosomal subunit biogenesis GTPase RsgA (290 aa).

The CP-type G domain maps to 62 to 213 (KNSLVRPPIV…IADTPGFSSL (152 aa)). Residues 111 to 114 (SKMD) and 156 to 164 (GQTGVGKST) contribute to the GTP site. Zn(2+) is bound by residues Cys237, Cys242, His244, and Cys250.

The protein belongs to the TRAFAC class YlqF/YawG GTPase family. RsgA subfamily. Monomer. Associates with 30S ribosomal subunit, binds 16S rRNA. Requires Zn(2+) as cofactor.

It is found in the cytoplasm. Its function is as follows. One of several proteins that assist in the late maturation steps of the functional core of the 30S ribosomal subunit. Helps release RbfA from mature subunits. May play a role in the assembly of ribosomal proteins into the subunit. Circularly permuted GTPase that catalyzes slow GTP hydrolysis, GTPase activity is stimulated by the 30S ribosomal subunit. The chain is Small ribosomal subunit biogenesis GTPase RsgA from Streptococcus pyogenes serotype M6 (strain ATCC BAA-946 / MGAS10394).